The primary structure comprises 1065 residues: Probable importin-7 homolog (1065 aa).

Positions 25 to 98 constitute an Importin N-terminal domain; sequence AEAQLQQIKV…KENLIDLLVH (74 aa). The tract at residues 958–996 is disordered; sequence ENGGDLGEDEGDNFDDQNDDDDQDSEEDLFEDEDTPDFE. Residues 963 to 996 show a composition bias toward acidic residues; that stretch reads LGEDEGDNFDDQNDDDDQDSEEDLFEDEDTPDFE.

This sequence belongs to the importin beta family.

The protein localises to the cytoplasm. Its subcellular location is the nucleus. May function in nuclear protein import. The sequence is that of Probable importin-7 homolog from Dictyostelium discoideum (Social amoeba).